The following is a 149-amino-acid chain: MNHLHRLFRITQVDRPVLLAITRRLSSKVPTEPTWKEVDESKLPNPTKIDQDTIAHLERLALVDFANKEGIRRLEAAIRFADQMFLVDTTGVEPMDSVLEDRELYLRDDVVTEGNCKDDILRNAGKVVEDYFVAPPGNIPLPKKEEYDS.

The N-terminal 25 residues, 1–25 (MNHLHRLFRITQVDRPVLLAITRRL), are a transit peptide targeting the mitochondrion.

The protein belongs to the GatC family. Subunit of the heterotrimeric GatCAB amidotransferase (AdT) complex, composed of A, B and C subunits.

Its subcellular location is the mitochondrion. The catalysed reaction is L-glutamyl-tRNA(Gln) + L-glutamine + ATP + H2O = L-glutaminyl-tRNA(Gln) + L-glutamate + ADP + phosphate + H(+). In terms of biological role, allows the formation of correctly charged Gln-tRNA(Gln) through the transamidation of misacylated Glu-tRNA(Gln) in the mitochondria. The reaction takes place in the presence of glutamine and ATP through an activated gamma-phospho-Glu-tRNA(Gln). In Branchiostoma floridae (Florida lancelet), this protein is Glutamyl-tRNA(Gln) amidotransferase subunit C, mitochondrial.